The following is a 376-amino-acid chain: UDP-N-acetylglucosamine 2-epimerase (376 aa).

Residues arginine 10, lysine 15, aspartate 95, glutamate 117, histidine 213, glutamine 271, phenylalanine 276, 290–292 (SGG), glutamate 296, and arginine 313 each bind substrate.

The protein belongs to the UDP-N-acetylglucosamine 2-epimerase family. Homodimer.

It is found in the cytoplasm. The enzyme catalyses UDP-N-acetyl-alpha-D-glucosamine = UDP-N-acetyl-alpha-D-mannosamine. It participates in bacterial outer membrane biogenesis; enterobacterial common antigen biosynthesis. Catalyzes the reversible epimerization at C-2 of UDP-N-acetylglucosamine (UDP-GlcNAc) and thereby provides bacteria with UDP-N-acetylmannosamine (UDP-ManNAc), the activated donor of ManNAc residues. The polypeptide is UDP-N-acetylglucosamine 2-epimerase (Salmonella typhimurium (strain LT2 / SGSC1412 / ATCC 700720)).